Consider the following 1938-residue polypeptide: Myosin-13 (1938 aa).

Residues 33–82 (DSKKACFVADNKEMYVKGMIQTRENDKVIVKTLDDRMLTLNNDQVFPMNP) enclose the Myosin N-terminal SH3-like domain. The region spanning 86 to 782 (DKIEDMAMMT…LLGLLEEMRD (697 aa)) is the Myosin motor domain. K130 carries the N6,N6,N6-trimethyllysine modification. 179–186 (GESGAGKT) is a binding site for ATP. 2 actin-binding regions span residues 659–681 (LNKL…IPNE) and 761–775 (RFGN…GLLG). The IQ domain occupies 785–814 (LVTLMTSTQAVCRGYLMRVEFKKMMERRDS). Residues 843-1938 (LLKSAEAEKE…RDVGSQKMEE (1096 aa)) are a coiled coil. A disordered region spans residues 1917–1938 (AESQVNKLRAKSRDVGSQKMEE). Over residues 1927 to 1938 (KSRDVGSQKMEE) the composition is skewed to basic and acidic residues.

It belongs to the TRAFAC class myosin-kinesin ATPase superfamily. Myosin family. In terms of assembly, muscle myosin is a hexameric protein that consists of 2 heavy chain subunits (MHC), 2 alkali light chain subunits (MLC) and 2 regulatory light chain subunits (MLC-2). As to expression, specifically expressed in extraocular and laryngeal muscles.

It localises to the cytoplasm. It is found in the myofibril. Its function is as follows. Fast twitching myosin mediating the high-velocity and low-tension contractions of specific striated muscles. The polypeptide is Myosin-13 (MYH13) (Homo sapiens (Human)).